The chain runs to 309 residues: 15-cis-phytoene synthase (309 aa).

The segment at 290–309 is disordered; the sequence is LTSRMRAHPPRPAHLWQRPL.

It belongs to the phytoene/squalene synthase family. ATP is required as a cofactor. The cofactor is Mn(2+). Mg(2+) serves as cofactor.

The catalysed reaction is 2 (2E,6E,10E)-geranylgeranyl diphosphate = 15-cis-phytoene + 2 diphosphate. The protein operates within carotenoid biosynthesis; phytoene biosynthesis. Its activity is regulated as follows. Inhibited by phosphate ions and squalestatin. Involved in the biosynthesis of carotenoids. Catalyzes the condensation of two molecules of geranylgeranyl diphosphate (GGPP) to give prephytoene diphosphate (PPPP) and the subsequent rearrangement of the cyclopropylcarbinyl intermediate to yield the 15-cis-phytoene isomer. This is 15-cis-phytoene synthase (crtB) from Pantoea ananas (Erwinia uredovora).